Reading from the N-terminus, the 445-residue chain is Methyl-CpG-binding domain protein 4-like protein (445 aa).

D429 is a catalytic residue.

As to expression, isoform 1 and isoform 4: Expressed in leaves and flowers, but not in roots or stems.

The protein localises to the nucleus. Functionally, monofunctional DNA glycosylase targeting U:G and T:G mispairs. Excises uracil derivatives and exhibits a preference for a CpG sequence context, irrespective of the methylation status of the complementary strand. The activity follows a biphasic kinetics, with an initial burst of product accumulation followed by a slower phase. Specifically binds its reaction product. Triggers the base excision repair (BER) pathway. The protein is Methyl-CpG-binding domain protein 4-like protein of Arabidopsis thaliana (Mouse-ear cress).